The chain runs to 350 residues: S-adenosylmethionine:tRNA ribosyltransferase-isomerase (350 aa).

Belongs to the QueA family. In terms of assembly, monomer.

The protein localises to the cytoplasm. It catalyses the reaction 7-aminomethyl-7-carbaguanosine(34) in tRNA + S-adenosyl-L-methionine = epoxyqueuosine(34) in tRNA + adenine + L-methionine + 2 H(+). It participates in tRNA modification; tRNA-queuosine biosynthesis. Transfers and isomerizes the ribose moiety from AdoMet to the 7-aminomethyl group of 7-deazaguanine (preQ1-tRNA) to give epoxyqueuosine (oQ-tRNA). The sequence is that of S-adenosylmethionine:tRNA ribosyltransferase-isomerase from Vibrio campbellii (strain ATCC BAA-1116).